A 342-amino-acid chain; its full sequence is 4-amino-5-hydroxymethyl-2-methylpyrimidine phosphate synthase (342 aa).

An N6-(pyridoxal phosphate)lysine modification is found at Lys62. The active site involves His66. Pyridoxal 5'-phosphate is bound at residue 115–118; sequence GEFG. A CCCFC; essential for catalytic activity, may be the site of iron coordination motif is present at residues 195-199; sequence CCCFC.

It belongs to the NMT1/THI5 family. Homodimer. Fe cation serves as cofactor.

The catalysed reaction is N(6)-(pyridoxal phosphate)-L-lysyl-[4-amino-5-hydroxymethyl-2-methylpyrimidine phosphate synthase] + L-histidyl-[4-amino-5-hydroxymethyl-2-methylpyrimidine phosphate synthase] + 2 Fe(3+) + 4 H2O = L-lysyl-[4-amino-5-hydroxymethyl-2-methylpyrimidine phosphate synthase] + (2S)-2-amino-5-hydroxy-4-oxopentanoyl-[4-amino-5-hydroxymethyl-2-methylpyrimidine phosphate synthase] + 4-amino-2-methyl-5-(phosphooxymethyl)pyrimidine + 3-oxopropanoate + 2 Fe(2+) + 2 H(+). Its pathway is cofactor biosynthesis; thiamine diphosphate biosynthesis. Responsible for the formation of the pyrimidine heterocycle in the thiamine biosynthesis pathway. Catalyzes the formation of hydroxymethylpyrimidine phosphate (HMP-P) from histidine and pyridoxal phosphate (PLP). The protein uses PLP and the active site histidine to form HMP-P, generating an inactive enzyme. The enzyme can only undergo a single turnover, which suggests it is a suicide enzyme. This chain is 4-amino-5-hydroxymethyl-2-methylpyrimidine phosphate synthase, found in Aspergillus parasiticus.